Reading from the N-terminus, the 101-residue chain is Small ribosomal subunit protein bS6 (101 aa).

Belongs to the bacterial ribosomal protein bS6 family.

Its function is as follows. Binds together with bS18 to 16S ribosomal RNA. In Pseudarthrobacter chlorophenolicus (strain ATCC 700700 / DSM 12829 / CIP 107037 / JCM 12360 / KCTC 9906 / NCIMB 13794 / A6) (Arthrobacter chlorophenolicus), this protein is Small ribosomal subunit protein bS6.